The chain runs to 434 residues: Methylenetetrahydrofolate--tRNA-(uracil-5-)-methyltransferase TrmFO (434 aa).

Residue 10-15 participates in FAD binding; that stretch reads GAGLAG.

Belongs to the MnmG family. TrmFO subfamily. FAD is required as a cofactor.

Its subcellular location is the cytoplasm. The enzyme catalyses uridine(54) in tRNA + (6R)-5,10-methylene-5,6,7,8-tetrahydrofolate + NADH + H(+) = 5-methyluridine(54) in tRNA + (6S)-5,6,7,8-tetrahydrofolate + NAD(+). The catalysed reaction is uridine(54) in tRNA + (6R)-5,10-methylene-5,6,7,8-tetrahydrofolate + NADPH + H(+) = 5-methyluridine(54) in tRNA + (6S)-5,6,7,8-tetrahydrofolate + NADP(+). Its function is as follows. Catalyzes the folate-dependent formation of 5-methyl-uridine at position 54 (M-5-U54) in all tRNAs. In Bacillus cereus (strain Q1), this protein is Methylenetetrahydrofolate--tRNA-(uracil-5-)-methyltransferase TrmFO.